Reading from the N-terminus, the 405-residue chain is MAAPSQEDPSLERHFKGHRDAVTCVDFSLNTKHLASGSMDSTLMIWHMKPQSRAYRFTGHKDAVTCVNFSPSGHLLASGSRDKTVRIWVPNVKGESTVFRAHTATVRSVHFCSDGQSLVTASDDKTVKVWSTHRQRFLFSLTQHINWVRCAKFSPDGRLIVSASDDKTVKLWDKTSRECIHSYCEHGGFVTYVDFHPSGTCIAAAGMDNTVKVWDARTHRLLQHYQLHSAAVNALSFHPSGNYLITASSDSTLKILDLMEGRLLYTLHGHQGPATTVAFSRTGEYFASGGSDEQVMVWKSNFDIVDYGDMKARRPPPLTSSSGTLPKMDLPVPPGRDRSLESVQGEPQESISMPQTLTSTLEHIVGQLDILTQTVSILEQRLTLTEDRLKQCLENQQLIMQRTPP.

WD repeat units lie at residues Gly-17–Arg-56, Gly-59–Val-98, Ala-101–Ser-140, Gln-143–Ser-182, Glu-185–His-224, Leu-227–Thr-266, and Gly-269–Gly-308. The disordered stretch occupies residues Arg-313 to Ser-352. Residues Glu-341–Ser-352 are compositionally biased toward polar residues. A coiled-coil region spans residues Gln-367–Asn-395.

It belongs to the WD repeat POC1 family. In terms of assembly, interacts with POC1B. As to expression, widely expressed in embryonic and adult tissues.

It localises to the cytoplasm. It is found in the cytoskeleton. The protein localises to the microtubule organizing center. Its subcellular location is the centrosome. The protein resides in the centriole. It localises to the cilium basal body. It is found in the spindle pole. Its function is as follows. Plays an important role in centriole assembly and/or stability and ciliogenesis. Involved in early steps of centriole duplication, as well as in the later steps of centriole length control. Acts in concert with POC1B to ensure centriole integrity and proper mitotic spindle formation. In Mus musculus (Mouse), this protein is POC1 centriolar protein homolog A (Poc1a).